The following is a 138-amino-acid chain: Acidic phospholipase A2 jerdoxin (138 aa).

The first 16 residues, 1-16 (MRTLWIMAVLLVGVEG), serve as a signal peptide directing secretion. 7 disulfide bridges follow: cysteine 42–cysteine 131, cysteine 44–cysteine 60, cysteine 59–cysteine 111, cysteine 65–cysteine 138, cysteine 66–cysteine 104, cysteine 73–cysteine 97, and cysteine 91–cysteine 102. Positions 43, 45, and 47 each coordinate Ca(2+). The active site involves histidine 63. Ca(2+) is bound at residue aspartate 64. Aspartate 105 is an active-site residue.

Belongs to the phospholipase A2 family. Group II subfamily. D49 sub-subfamily. Monomer. Requires Ca(2+) as cofactor. In terms of tissue distribution, expressed by the venom gland.

It localises to the secreted. The catalysed reaction is a 1,2-diacyl-sn-glycero-3-phosphocholine + H2O = a 1-acyl-sn-glycero-3-phosphocholine + a fatty acid + H(+). Its function is as follows. Snake venom phospholipase A2 (PLA2) that displays edema-inducing activities, exhibits indirect hemolytic activity, and inhibits ADP-induced platelet aggregation. PLA2 catalyzes the calcium-dependent hydrolysis of the 2-acyl groups in 3-sn-phosphoglycerides. This chain is Acidic phospholipase A2 jerdoxin, found in Protobothrops jerdonii (Jerdon's pitviper).